The following is a 221-amino-acid chain: Urease accessory protein UreF (221 aa).

It belongs to the UreF family. UreD, UreF and UreG form a complex that acts as a GTP-hydrolysis-dependent molecular chaperone, activating the urease apoprotein by helping to assemble the nickel containing metallocenter of UreC. The UreE protein probably delivers the nickel.

It localises to the cytoplasm. In terms of biological role, required for maturation of urease via the functional incorporation of the urease nickel metallocenter. This is Urease accessory protein UreF from Aliivibrio fischeri (strain MJ11) (Vibrio fischeri).